The following is a 270-amino-acid chain: uncharacterized protein (270 aa).

An N-terminal signal peptide occupies residues 1-22 (MEYIKKIALYMSVLLLIIFIGG). Residue cysteine 23 is the site of N-palmitoyl cysteine attachment. Cysteine 23 is lipidated: S-diacylglycerol cysteine.

This sequence belongs to the staphylococcal tandem lipoprotein family.

The protein resides in the cell membrane. This is an uncharacterized protein from Staphylococcus aureus (strain NCTC 8325 / PS 47).